The following is an 89-amino-acid chain: UPF0223 protein BCA_4066 (89 aa).

Belongs to the UPF0223 family.

The protein is UPF0223 protein BCA_4066 of Bacillus cereus (strain 03BB102).